Here is a 681-residue protein sequence, read N- to C-terminus: T-box-containing protein 2 (681 aa).

Residues 149–323 constitute a DNA-binding region (T-box); it reads LWDQFSRAGT…NNPFAKGFRE (175 aa). 4 disordered regions span residues 316–351, 456–489, 521–558, and 589–611; these read PFAK…EQRR, GITS…NQSN, PNIN…LIPG, and ESGE…CQSG. Over residues 470–489 the composition is skewed to low complexity; it reads NSFTYYNSSSPSSSDSNQSN. Polar residues predominate over residues 521 to 534; that stretch reads PNINIPNTVETNVH.

Monomer. In terms of tissue distribution, differentiating muscle and tailbud tip.

It localises to the nucleus. Its function is as follows. Involved in the transcriptional regulation of genes required for muscle differentiation. Binds to a palindromic site (called T site) and activates gene transcription when bound to such a site. In Halocynthia roretzi (Sea squirt), this protein is T-box-containing protein 2 (T2).